The sequence spans 210 residues: Thymidylate kinase (210 aa).

Residue 10 to 17 (GLEGAGKS) coordinates ATP.

It belongs to the thymidylate kinase family.

It catalyses the reaction dTMP + ATP = dTDP + ADP. Phosphorylation of dTMP to form dTDP in both de novo and salvage pathways of dTTP synthesis. The protein is Thymidylate kinase (tmk) of Haemophilus influenzae (strain ATCC 51907 / DSM 11121 / KW20 / Rd).